A 307-amino-acid chain; its full sequence is Elongation factor Ts (307 aa).

The interval 80–83 is involved in Mg(2+) ion dislocation from EF-Tu; that stretch reads TDFV.

The protein belongs to the EF-Ts family.

Its subcellular location is the cytoplasm. Associates with the EF-Tu.GDP complex and induces the exchange of GDP to GTP. It remains bound to the aminoacyl-tRNA.EF-Tu.GTP complex up to the GTP hydrolysis stage on the ribosome. In Variovorax paradoxus (strain S110), this protein is Elongation factor Ts.